Consider the following 390-residue polypeptide: Malonyl-CoA-acyl carrier protein transacylase, mitochondrial (390 aa).

The N-terminal 21 residues, 1–21 (MSVRVARVAWVRGLGASYRRG), are a transit peptide targeting the mitochondrion. Residues Ser-153 and His-270 contribute to the active site. The residue at position 314 (Lys-314) is an N6-succinyllysine.

This sequence belongs to the type II malonyltransferase family.

It localises to the mitochondrion. The enzyme catalyses holo-[ACP] + malonyl-CoA = malonyl-[ACP] + CoA. It functions in the pathway lipid metabolism; fatty acid biosynthesis. In terms of biological role, catalyzes the transfer of a malonyl moiety from malonyl-CoA to the free thiol group of the phosphopantetheine arm of the mitochondrial ACP protein (NDUFAB1). This suggests the existence of the biosynthesis of fatty acids in mitochondria. Also acts as a mitochondrial small ribosomal subunit (mt-SSU) assembly factor. This is Malonyl-CoA-acyl carrier protein transacylase, mitochondrial from Homo sapiens (Human).